Here is a 158-residue protein sequence, read N- to C-terminus: Small ribosomal subunit protein uS7 (158 aa).

The protein belongs to the universal ribosomal protein uS7 family. In terms of assembly, part of the 30S ribosomal subunit. Contacts proteins S9 and S11.

Functionally, one of the primary rRNA binding proteins, it binds directly to 16S rRNA where it nucleates assembly of the head domain of the 30S subunit. Is located at the subunit interface close to the decoding center, probably blocks exit of the E-site tRNA. The polypeptide is Small ribosomal subunit protein uS7 (Gluconobacter oxydans (strain 621H) (Gluconobacter suboxydans)).